Here is a 426-residue protein sequence, read N- to C-terminus: Dihydroorotase (426 aa).

Zn(2+) is bound by residues histidine 58 and histidine 60. Substrate contacts are provided by residues 60–62 (HLR) and asparagine 92. Residues aspartate 150, histidine 177, and histidine 230 each coordinate Zn(2+). Asparagine 276 is a substrate binding site. Aspartate 303 is a Zn(2+) binding site. Aspartate 303 is an active-site residue. Residues histidine 307 and 321 to 322 (FG) contribute to the substrate site.

The protein belongs to the metallo-dependent hydrolases superfamily. DHOase family. Class I DHOase subfamily. Zn(2+) serves as cofactor.

It carries out the reaction (S)-dihydroorotate + H2O = N-carbamoyl-L-aspartate + H(+). The protein operates within pyrimidine metabolism; UMP biosynthesis via de novo pathway; (S)-dihydroorotate from bicarbonate: step 3/3. Its function is as follows. Catalyzes the reversible cyclization of carbamoyl aspartate to dihydroorotate. In Listeria welshimeri serovar 6b (strain ATCC 35897 / DSM 20650 / CCUG 15529 / CIP 8149 / NCTC 11857 / SLCC 5334 / V8), this protein is Dihydroorotase.